Reading from the N-terminus, the 98-residue chain is MKIDQAAVAGTLESGDVMIRIAPLDTQDIDLQINSSVEKQFGDAIRATILDVLARYNVRGVQLNVDDKGALDCILRARLEALLARASGIPALPWEDRQ.

Residue S14 is modified to O-(phosphoribosyl dephospho-coenzyme A)serine.

This sequence belongs to the CitD family. In terms of assembly, oligomer with a subunit composition of (alpha,beta,gamma)6.

Its subcellular location is the cytoplasm. Its function is as follows. Covalent carrier of the coenzyme of citrate lyase. The polypeptide is Citrate lyase acyl carrier protein (Citrobacter koseri (strain ATCC BAA-895 / CDC 4225-83 / SGSC4696)).